The sequence spans 343 residues: Apolipoprotein L6 (343 aa).

Residues 1 to 10 show a composition bias toward basic and acidic residues; it reads MDNQAERESE. Residues 1-24 are disordered; the sequence is MDNQAERESEAGVGLQRDEDDAPL.

Belongs to the apolipoprotein L family. Widely expressed; highly expressed in the uterus, fetal brain and spinal cord, also detected in heart, liver, lung, colon, spleen, thymus, prostate, placenta, adrenal gland, salivary and mammary gland.

The protein resides in the cytoplasm. Functionally, may affect the movement of lipids in the cytoplasm or allow the binding of lipids to organelles. The chain is Apolipoprotein L6 (APOL6) from Homo sapiens (Human).